Reading from the N-terminus, the 447-residue chain is Glutamyl-tRNA(Gln) amidotransferase subunit A (447 aa).

Catalysis depends on charge relay system residues lysine 50 and serine 125. Serine 149 functions as the Acyl-ester intermediate in the catalytic mechanism.

This sequence belongs to the amidase family. GatA subfamily. As to quaternary structure, heterotrimer of A, B and C subunits.

The catalysed reaction is L-glutamyl-tRNA(Gln) + L-glutamine + ATP + H2O = L-glutaminyl-tRNA(Gln) + L-glutamate + ADP + phosphate + H(+). In terms of biological role, allows the formation of correctly charged Gln-tRNA(Gln) through the transamidation of misacylated Glu-tRNA(Gln) in organisms which lack glutaminyl-tRNA synthetase. The reaction takes place in the presence of glutamine and ATP through an activated gamma-phospho-Glu-tRNA(Gln). This chain is Glutamyl-tRNA(Gln) amidotransferase subunit A, found in Sulfurimonas denitrificans (strain ATCC 33889 / DSM 1251) (Thiomicrospira denitrificans (strain ATCC 33889 / DSM 1251)).